Reading from the N-terminus, the 99-residue chain is Small ribosomal subunit protein uS14m (99 aa).

It belongs to the universal ribosomal protein uS14 family.

The protein localises to the mitochondrion. The protein is Small ribosomal subunit protein uS14m (RPS14) of Oenothera berteroana (Bertero's evening primrose).